Reading from the N-terminus, the 398-residue chain is Enoyl-[acyl-carrier-protein] reductase [NADH] (398 aa).

Residues 48 to 53 (GASTGY), 74 to 75 (FE), 111 to 112 (DG), and 139 to 140 (LA) each bind NAD(+). Tyrosine 225 lines the substrate pocket. Tyrosine 235 serves as the catalytic Proton donor. NAD(+) contacts are provided by residues lysine 244 and 273-275 (VVT).

The protein belongs to the TER reductase family. As to quaternary structure, monomer.

It catalyses the reaction a 2,3-saturated acyl-[ACP] + NAD(+) = a (2E)-enoyl-[ACP] + NADH + H(+). It functions in the pathway lipid metabolism; fatty acid biosynthesis. Involved in the final reduction of the elongation cycle of fatty acid synthesis (FAS II). Catalyzes the reduction of a carbon-carbon double bond in an enoyl moiety that is covalently linked to an acyl carrier protein (ACP). The chain is Enoyl-[acyl-carrier-protein] reductase [NADH] from Variovorax paradoxus (strain S110).